Reading from the N-terminus, the 907-residue chain is MANETQKVGAIHFPFPFTPYSIQEDFMAELYRVLEAGKIGIFESPTGTGKSLSLICGALSWLRDFEQKKREEEARLLETGTGPLHDEKDESLCLSSSCEGAAGTPRPAGEPAWVTQFVQKKEERDLVDRLKVEQARRKQREERLQQLQHRVQLKYAAKRLRQEEEETENLLRLSREMLETGPEAERLEQLESGEEELVLAEYESDEEKKVASGHRVDEDEDDLEEEHITKIYHCSRTHSQLAQFVHEVKKSPFGKDVRLVSLGSRQNLCVNEDVRSLGSVQLINDRCVDMQRSRHEKKKGAEEEKPKRRRQEKQAACPFYNHEQMGLLRDEALAEVKDMEQLLALGKEARACPYYRSRLAIPAAKLVVLPYQMLLHAATRQAAGIRLQDQVVIIDEAHNLIDTITGMHSVEVSGSQLCQAHSQLLQYMERYGKRLKAKNLMYLKQILYLLEKFVAVLGGNIKQNPNTQSLSQTGTELKTINDFLFQSQIDNINLFKVQRYCEKSMISRKLFGFTERYGAVFSSREQPKLAGFQQFLQSLQPRTTEALAAPADESQASVPQPASPLMHIEGFLAALTTANQDGRVILSRQGSLSESTLKFLLLNPAVHFAQVVKECRAVVIAGGTMQPVSDFRQQLLACAGVEAERVVEFSCGHVIPPDNIPLVICSGISNQPLEFTFQKRDLPQMMDEVGRILCNLCGVVSGGVVCFFSSYEYLRQVHAHWEKGGLLGRLAARKKIFQEPKSAHQVEQVLLAYSRCIQACGQERGQVTEALLLSVVGGKMSEGINFSDNLGRCVVMVGMPFPNIRSAELQEKMAYLDQTLPRAPGQAPPGKALVENLCMKAVNQSIGRAIRHQKDFASIVLLDQRYARPPVLAKLPAWIRASVEVKATFGPAIAAVQKFHREKSASS.

The Helicase ATP-binding domain occupies 9-447; sequence GAIHFPFPFT…KNLMYLKQIL (439 aa). 44 to 51 contributes to the ATP binding site; it reads SPTGTGKS. The tract at residues 202 to 222 is disordered; the sequence is YESDEEKKVASGHRVDEDEDD. Residues 206–217 are compositionally biased toward basic and acidic residues; it reads EEKKVASGHRVD. Serine 264 is subject to Phosphoserine. Residues cysteine 269 and cysteine 287 each coordinate [4Fe-4S] cluster. Over residues 291–306 the composition is skewed to basic and acidic residues; it reads QRSRHEKKKGAEEEKP. The interval 291 to 314 is disordered; it reads QRSRHEKKKGAEEEKPKRRRQEKQ. The [4Fe-4S] cluster site is built by cysteine 317 and cysteine 352. The DEAH signature appears at 395–398; sequence DEAH.

Belongs to the DEAD box helicase family. DEAH subfamily. DDX11/CHL1 sub-subfamily. The cofactor is [4Fe-4S] cluster.

It is found in the nucleus. It localises to the nucleolus. Its function is as follows. Putative DNA helicase. This Homo sapiens (Human) protein is Putative ATP-dependent DNA helicase DDX11-like protein 8 (DDX11L8).